Here is a 209-residue protein sequence, read N- to C-terminus: Putative NAD(P)H nitroreductase YdgI (209 aa).

FMN is bound by residues 14-16 (RRS), 72-74 (QTQ), 161-162 (GG), and R199.

The protein belongs to the nitroreductase family. The cofactor is FMN.

This chain is Putative NAD(P)H nitroreductase YdgI (ydgI), found in Bacillus subtilis (strain 168).